An 831-amino-acid polypeptide reads, in one-letter code: Periplasmic nitrate reductase (831 aa).

A signal peptide (tat-type signal) is located at residues 1-38; the sequence is MSMARRDFIKQTAAAAAATVAGVPLTGYTQNIVTESEA. In terms of domain architecture, 4Fe-4S Mo/W bis-MGD-type spans 41-97; that stretch reads LKWSKAPCRFCGTGCGVNVAVKDNQVVATHGDFNAEVNKGLNCVKGYFLSKIMYGSD. Positions 48, 51, 55, and 83 each coordinate [4Fe-4S] cluster. Mo-bis(molybdopterin guanine dinucleotide) contacts are provided by residues lysine 85, glutamine 152, asparagine 177, cysteine 181, 214–221, 245–249, 264–266, methionine 375, glutamine 379, asparagine 485, 511–512, lysine 534, aspartate 561, and 721–730; these read WGSNMAEM, STFEH, QSD, SD, and TGRVLEHWHS. Tryptophan 797 is a substrate binding site. Positions 805 and 822 each coordinate Mo-bis(molybdopterin guanine dinucleotide).

This sequence belongs to the prokaryotic molybdopterin-containing oxidoreductase family. NasA/NapA/NarB subfamily. Component of the periplasmic nitrate reductase NapAB complex composed of NapA and NapB. Requires [4Fe-4S] cluster as cofactor. It depends on Mo-bis(molybdopterin guanine dinucleotide) as a cofactor. In terms of processing, predicted to be exported by the Tat system. The position of the signal peptide cleavage has not been experimentally proven.

The protein localises to the periplasm. It carries out the reaction 2 Fe(II)-[cytochrome] + nitrate + 2 H(+) = 2 Fe(III)-[cytochrome] + nitrite + H2O. Catalytic subunit of the periplasmic nitrate reductase complex NapAB. Receives electrons from NapB and catalyzes the reduction of nitrate to nitrite. The polypeptide is Periplasmic nitrate reductase (Bordetella parapertussis (strain 12822 / ATCC BAA-587 / NCTC 13253)).